The chain runs to 340 residues: DNA-directed RNA polymerase subunit alpha (340 aa).

The tract at residues 1 to 233 (MIRDEISVST…DLFIPFLRAE (233 aa)) is alpha N-terminal domain (alpha-NTD). The alpha C-terminal domain (alpha-CTD) stretch occupies residues 268–340 (AFKHIFIDQS…DLPKNKFQIH (73 aa)).

The protein belongs to the RNA polymerase alpha chain family. In terms of assembly, in plastids the minimal PEP RNA polymerase catalytic core is composed of four subunits: alpha, beta, beta', and beta''. When a (nuclear-encoded) sigma factor is associated with the core the holoenzyme is formed, which can initiate transcription.

It localises to the plastid. The protein resides in the chloroplast. It catalyses the reaction RNA(n) + a ribonucleoside 5'-triphosphate = RNA(n+1) + diphosphate. Functionally, DNA-dependent RNA polymerase catalyzes the transcription of DNA into RNA using the four ribonucleoside triphosphates as substrates. The protein is DNA-directed RNA polymerase subunit alpha of Cycas taitungensis (Prince sago).